We begin with the raw amino-acid sequence, 586 residues long: A-type ATP synthase subunit A (586 aa).

232–239 is a binding site for ATP; that stretch reads GPFGSGKT.

The protein belongs to the ATPase alpha/beta chains family. In terms of assembly, has multiple subunits with at least A(3), B(3), C, D, E, F, H, I and proteolipid K(x).

The protein resides in the cell membrane. It catalyses the reaction ATP + H2O + 4 H(+)(in) = ADP + phosphate + 5 H(+)(out). Functionally, component of the A-type ATP synthase that produces ATP from ADP in the presence of a proton gradient across the membrane. The A chain is the catalytic subunit. This Methanococcus maripaludis (strain C7 / ATCC BAA-1331) protein is A-type ATP synthase subunit A.